We begin with the raw amino-acid sequence, 310 residues long: Ribosomal RNA small subunit methyltransferase H (310 aa).

Residues 32–34 (AGH), D52, F79, D100, and Q107 contribute to the S-adenosyl-L-methionine site.

It belongs to the methyltransferase superfamily. RsmH family.

The protein localises to the cytoplasm. The enzyme catalyses cytidine(1402) in 16S rRNA + S-adenosyl-L-methionine = N(4)-methylcytidine(1402) in 16S rRNA + S-adenosyl-L-homocysteine + H(+). Its function is as follows. Specifically methylates the N4 position of cytidine in position 1402 (C1402) of 16S rRNA. This Bacillus pumilus (strain SAFR-032) protein is Ribosomal RNA small subunit methyltransferase H.